Here is a 191-residue protein sequence, read N- to C-terminus: UPF0312 protein Shewmr4_1178 (191 aa).

The N-terminal stretch at Met-1–Ala-22 is a signal peptide.

The protein belongs to the UPF0312 family. Type 1 subfamily.

It localises to the periplasm. This is UPF0312 protein Shewmr4_1178 from Shewanella sp. (strain MR-4).